We begin with the raw amino-acid sequence, 908 residues long: Autophagy-related protein 9 (908 aa).

The Cytoplasmic segment spans residues 1–216 (MADGVIARLM…SGMWCIVVER (216 aa)). Residues 64 to 162 (SRATVDGRIP…IDQELQPPLH (99 aa)) are disordered. A helical transmembrane segment spans residues 217–237 (VLHLIKVAFVAFLLTFLSQCV). Over 238 to 259 (DFKKIPSNQKLSQVLVPQCTRN) the chain is Lumenal. Asn-259 is a glycosylation site (N-linked (GlcNAc...) asparagine). The chain crosses the membrane as a helical span at residues 260–280 (MSGLWNIGLWLFAFYFMWKSI). Topologically, residues 281 to 433 (QYILDLRRLT…GILSAKLRSR (153 aa)) are cytoplasmic. An intramembrane segment occupies 434–454 (FIFAGVMILILSPFVAGYLII). Topologically, residues 455–525 (VYFLEYYNEI…KTSMVAKTVS (71 aa)) are cytoplasmic. Residues 526–546 (FIAGSIATVLALISVFDPEMF) traverse the membrane as a helical segment. Over 547-555 (LGFEITHDR) the chain is Lumenal. Residues 556–576 (TVLFYTAVFGAIWSVARGSVS) traverse the membrane as a helical segment. Topologically, residues 577 to 622 (EDNAVFDPEYALGNVVEYTHYQPEHWKDRWHSADVKAEFEELYKLK) are cytoplasmic. An intramembrane segment occupies 623 to 643 (LVIFIEEILSILTTPFVLFFS). The Cytoplasmic portion of the chain corresponds to 644–908 (LPKSADQIID…HLNRRLGGVR (265 aa)). Disordered regions lie at residues 751 to 779 (AASRMGRSQRGRSKGPLPSRTPRPGAVMA) and 809 to 878 (QFRG…DSVV). Residues 813–825 (GNQGDGHMMGGGS) are compositionally biased toward gly residues. Over residues 839 to 852 (QTHDDESEDSRAGL) the composition is skewed to basic and acidic residues.

This sequence belongs to the ATG9 family. As to quaternary structure, homotrimer; forms a homotrimer with a central pore that forms a path between the two membrane leaflets. Phosphorylated by apg-1. Apg-1 phosphorylation is required for preautophagosome elongation.

The protein resides in the preautophagosomal structure membrane. Its subcellular location is the cytoplasmic vesicle membrane. It localises to the golgi apparatus membrane. It is found in the endoplasmic reticulum membrane. It catalyses the reaction a 1,2-diacyl-sn-glycero-3-phosphocholine(in) = a 1,2-diacyl-sn-glycero-3-phosphocholine(out). The catalysed reaction is a 1,2-diacyl-sn-glycero-3-phospho-L-serine(in) = a 1,2-diacyl-sn-glycero-3-phospho-L-serine(out). It carries out the reaction a 1,2-diacyl-sn-glycero-3-phosphoethanolamine(in) = a 1,2-diacyl-sn-glycero-3-phosphoethanolamine(out). The enzyme catalyses a 1,2-diacyl-sn-glycero-3-phospho-(1D-myo-inositol-3-phosphate)(in) = a 1,2-diacyl-sn-glycero-3-phospho-(1D-myo-inositol-3-phosphate)(out). Its function is as follows. Phospholipid scramblase involved in autophagy and cytoplasm to vacuole transport (Cvt) vesicle formation. Cycles between the preautophagosomal structure/phagophore assembly site (PAS) and the cytoplasmic vesicle pool and supplies membrane for the growing autophagosome. Lipid scramblase activity plays a key role in preautophagosomal structure/phagophore assembly by distributing the phospholipids that arrive through atg-2 from the cytoplasmic to the luminal leaflet of the bilayer, thereby driving autophagosomal membrane expansion. Required for mitophagy. Also involved in endoplasmic reticulum-specific autophagic process and is essential for the survival of cells subjected to severe ER stress. Different machineries are required for anterograde trafficking to the PAS during either the Cvt pathway or bulk autophagy and for retrograde trafficking. This is Autophagy-related protein 9 (apg-7) from Neurospora crassa (strain ATCC 24698 / 74-OR23-1A / CBS 708.71 / DSM 1257 / FGSC 987).